The sequence spans 102 residues: Phosphoribosyl-ATP pyrophosphatase (102 aa).

The protein belongs to the PRA-PH family.

The protein localises to the cytoplasm. It carries out the reaction 1-(5-phospho-beta-D-ribosyl)-ATP + H2O = 1-(5-phospho-beta-D-ribosyl)-5'-AMP + diphosphate + H(+). Its pathway is amino-acid biosynthesis; L-histidine biosynthesis; L-histidine from 5-phospho-alpha-D-ribose 1-diphosphate: step 2/9. The protein is Phosphoribosyl-ATP pyrophosphatase of Dinoroseobacter shibae (strain DSM 16493 / NCIMB 14021 / DFL 12).